Consider the following 333-residue polypeptide: NADH-quinone oxidoreductase subunit H (333 aa).

Transmembrane regions (helical) follow at residues 17–37, 91–111, 116–136, 156–176, 188–208, 244–264, 272–292, and 310–330; these read VIQAIVILLVVVLVAALMSFI, VAMATAVLSFIVIPVSPTLGV, IGLLFFMAMAGIAVYAVLFGG, ISYEVFLGISLMGVVAIAGSF, MWFIVPQFLGFMIFVVAGVAV, YVNIVLISALIVTLFFGGWLA, FIPPVFWFIVKTAFFVMMFVL, and WKVCLPLALVNLMVTGAVILM.

Belongs to the complex I subunit 1 family. NDH-1 is composed of 14 different subunits. Subunits NuoA, H, J, K, L, M, N constitute the membrane sector of the complex.

It is found in the cell inner membrane. The enzyme catalyses a quinone + NADH + 5 H(+)(in) = a quinol + NAD(+) + 4 H(+)(out). Functionally, NDH-1 shuttles electrons from NADH, via FMN and iron-sulfur (Fe-S) centers, to quinones in the respiratory chain. The immediate electron acceptor for the enzyme in this species is believed to be ubiquinone. Couples the redox reaction to proton translocation (for every two electrons transferred, four hydrogen ions are translocated across the cytoplasmic membrane), and thus conserves the redox energy in a proton gradient. This subunit may bind ubiquinone. This chain is NADH-quinone oxidoreductase subunit H, found in Acinetobacter baylyi (strain ATCC 33305 / BD413 / ADP1).